A 510-amino-acid polypeptide reads, in one-letter code: Probable cytochrome P450 517A2 (510 aa).

The helical transmembrane segment at 1–21 (MRILIIIILIIIVFLVKDTIK) threads the bilayer. Cys450 is a binding site for heme.

The protein belongs to the cytochrome P450 family. The cofactor is heme.

It is found in the membrane. The sequence is that of Probable cytochrome P450 517A2 (cyp517A2) from Dictyostelium discoideum (Social amoeba).